The sequence spans 379 residues: Succinyl-diaminopimelate desuccinylase (379 aa).

His70 lines the Zn(2+) pocket. Residue Asp72 is part of the active site. Zn(2+) is bound at residue Asp103. Glu137 functions as the Proton acceptor in the catalytic mechanism. Zn(2+) contacts are provided by Glu138, Glu166, and His352.

Belongs to the peptidase M20A family. DapE subfamily. As to quaternary structure, homodimer. It depends on Zn(2+) as a cofactor. Requires Co(2+) as cofactor.

It catalyses the reaction N-succinyl-(2S,6S)-2,6-diaminopimelate + H2O = (2S,6S)-2,6-diaminopimelate + succinate. The protein operates within amino-acid biosynthesis; L-lysine biosynthesis via DAP pathway; LL-2,6-diaminopimelate from (S)-tetrahydrodipicolinate (succinylase route): step 3/3. Catalyzes the hydrolysis of N-succinyl-L,L-diaminopimelic acid (SDAP), forming succinate and LL-2,6-diaminopimelate (DAP), an intermediate involved in the bacterial biosynthesis of lysine and meso-diaminopimelic acid, an essential component of bacterial cell walls. The sequence is that of Succinyl-diaminopimelate desuccinylase from Burkholderia cenocepacia (strain ATCC BAA-245 / DSM 16553 / LMG 16656 / NCTC 13227 / J2315 / CF5610) (Burkholderia cepacia (strain J2315)).